An 866-amino-acid polypeptide reads, in one-letter code: Replication factor C small subunit (866 aa).

In terms of domain architecture, DOD-type homing endonuclease spans 183–313 (WLGYFIGDGH…VTYALAGFGI (131 aa)).

It belongs to the activator 1 small subunits family. RfcS subfamily. As to quaternary structure, heteromultimer composed of small subunits (RfcS) and large subunits (RfcL). Post-translationally, this protein undergoes a protein self splicing that involves a post-translational excision of the intervening region (intein) followed by peptide ligation.

Functionally, part of the RFC clamp loader complex which loads the PCNA sliding clamp onto DNA. This is Replication factor C small subunit (rfcS) from Thermococcus kodakarensis (strain ATCC BAA-918 / JCM 12380 / KOD1) (Pyrococcus kodakaraensis (strain KOD1)).